The following is a 221-amino-acid chain: Orotate phosphoribosyltransferase (221 aa).

A 5-phospho-alpha-D-ribose 1-diphosphate-binding site is contributed by Lys27. Residue 35–36 (FF) participates in orotate binding. 5-phospho-alpha-D-ribose 1-diphosphate is bound by residues 75–76 (YK), Arg102, Lys103, Lys106, His108, and 128–136 (DDVLTAGTA). Orotate is bound by residues Thr132 and Arg160.

The protein belongs to the purine/pyrimidine phosphoribosyltransferase family. PyrE subfamily. As to quaternary structure, homodimer. Requires Mg(2+) as cofactor.

The enzyme catalyses orotidine 5'-phosphate + diphosphate = orotate + 5-phospho-alpha-D-ribose 1-diphosphate. It participates in pyrimidine metabolism; UMP biosynthesis via de novo pathway; UMP from orotate: step 1/2. Catalyzes the transfer of a ribosyl phosphate group from 5-phosphoribose 1-diphosphate to orotate, leading to the formation of orotidine monophosphate (OMP). The polypeptide is Orotate phosphoribosyltransferase (Dichelobacter nodosus (strain VCS1703A)).